Reading from the N-terminus, the 450-residue chain is CBL-interacting protein kinase 23 (450 aa).

Positions 13–268 constitute a Protein kinase domain; it reads YELGRTLGEG…IAELINNEWF (256 aa). Residues 19–27 and K42 each bind ATP; that span reads LGEGTFAKV. D136 (proton acceptor) is an active-site residue. The activation loop stretch occupies residues 154–183; it reads DFGLSALSQQVREDGLLHTTCGTPNYVAPE. In terms of domain architecture, NAF spans 306-331; sequence EERPSVMNAFELISTSQGLNLGTLFE. Residues 339 to 368 form a PPI region; the sequence is KRETRFASRLPANEILSKIEAAAGPMGFNV.

It belongs to the protein kinase superfamily. CAMK Ser/Thr protein kinase family. SNF1 subfamily. Requires Mn(2+) as cofactor.

It catalyses the reaction L-seryl-[protein] + ATP = O-phospho-L-seryl-[protein] + ADP + H(+). It carries out the reaction L-threonyl-[protein] + ATP = O-phospho-L-threonyl-[protein] + ADP + H(+). Functionally, CIPK serine-threonine protein kinases interact with CBL proteins. Binding of a CBL protein to the regulatory NAF domain of CIPK protein lead to the activation of the kinase in a calcium-dependent manner. The chain is CBL-interacting protein kinase 23 (CIPK23) from Oryza sativa subsp. japonica (Rice).